The following is a 351-amino-acid chain: Holliday junction branch migration complex subunit RuvB (351 aa).

A compositionally biased stretch (acidic residues) spans 1–12 (MGRFEDDAEVED). The interval 1 to 23 (MGRFEDDAEVEDREVSPALTVGE) is disordered. Residues 1-191 (MGRFEDDAEV…FGFTAHMDFY (191 aa)) are large ATPase domain (RuvB-L). ATP is bound by residues Leu-30, Arg-31, Gly-72, Lys-75, Thr-76, Ser-77, 138–140 (EDF), Arg-181, Tyr-191, and Arg-228. A Mg(2+)-binding site is contributed by Thr-76. A small ATPAse domain (RuvB-S) region spans residues 192–262 (EPVELERVLA…IAKSALEVYD (71 aa)). The tract at residues 265-351 (ELGLDRLDRA…TGIGQAGLFD (87 aa)) is head domain (RuvB-H). DNA contacts are provided by Arg-320 and Arg-325.

It belongs to the RuvB family. As to quaternary structure, homohexamer. Forms an RuvA(8)-RuvB(12)-Holliday junction (HJ) complex. HJ DNA is sandwiched between 2 RuvA tetramers; dsDNA enters through RuvA and exits via RuvB. An RuvB hexamer assembles on each DNA strand where it exits the tetramer. Each RuvB hexamer is contacted by two RuvA subunits (via domain III) on 2 adjacent RuvB subunits; this complex drives branch migration. In the full resolvosome a probable DNA-RuvA(4)-RuvB(12)-RuvC(2) complex forms which resolves the HJ.

The protein resides in the cytoplasm. The enzyme catalyses ATP + H2O = ADP + phosphate + H(+). In terms of biological role, the RuvA-RuvB-RuvC complex processes Holliday junction (HJ) DNA during genetic recombination and DNA repair, while the RuvA-RuvB complex plays an important role in the rescue of blocked DNA replication forks via replication fork reversal (RFR). RuvA specifically binds to HJ cruciform DNA, conferring on it an open structure. The RuvB hexamer acts as an ATP-dependent pump, pulling dsDNA into and through the RuvAB complex. RuvB forms 2 homohexamers on either side of HJ DNA bound by 1 or 2 RuvA tetramers; 4 subunits per hexamer contact DNA at a time. Coordinated motions by a converter formed by DNA-disengaged RuvB subunits stimulates ATP hydrolysis and nucleotide exchange. Immobilization of the converter enables RuvB to convert the ATP-contained energy into a lever motion, pulling 2 nucleotides of DNA out of the RuvA tetramer per ATP hydrolyzed, thus driving DNA branch migration. The RuvB motors rotate together with the DNA substrate, which together with the progressing nucleotide cycle form the mechanistic basis for DNA recombination by continuous HJ branch migration. Branch migration allows RuvC to scan DNA until it finds its consensus sequence, where it cleaves and resolves cruciform DNA. The sequence is that of Holliday junction branch migration complex subunit RuvB from Mycolicibacterium smegmatis (strain ATCC 700084 / mc(2)155) (Mycobacterium smegmatis).